A 100-amino-acid polypeptide reads, in one-letter code: DNA-directed RNA polymerase subunit Rpo11 (100 aa).

It belongs to the archaeal Rpo11/eukaryotic RPB11/RPC19 RNA polymerase subunit family. As to quaternary structure, part of the RNA polymerase complex.

Its subcellular location is the cytoplasm. The catalysed reaction is RNA(n) + a ribonucleoside 5'-triphosphate = RNA(n+1) + diphosphate. Functionally, DNA-dependent RNA polymerase (RNAP) catalyzes the transcription of DNA into RNA using the four ribonucleoside triphosphates as substrates. The polypeptide is DNA-directed RNA polymerase subunit Rpo11 (Picrophilus torridus (strain ATCC 700027 / DSM 9790 / JCM 10055 / NBRC 100828 / KAW 2/3)).